Reading from the N-terminus, the 490-residue chain is Cytochrome P450 2C28 (490 aa).

Phosphoserine is present on S127. An N6-acetyllysine mark is found at K249 and K375. A heme-binding site is contributed by C435.

It belongs to the cytochrome P450 family. Heme is required as a cofactor. In terms of tissue distribution, liver.

The protein localises to the endoplasmic reticulum membrane. The protein resides in the microsome membrane. The enzyme catalyses an organic molecule + reduced [NADPH--hemoprotein reductase] + O2 = an alcohol + oxidized [NADPH--hemoprotein reductase] + H2O + H(+). In terms of biological role, catalyzes the N-demethylation of aminopyrine and benzphetamine, but does not catalyze the hydroxylation of tolbutamide, testosterone, and progesterone. The sequence is that of Cytochrome P450 2C28 (CYP2C28) from Mesocricetus auratus (Golden hamster).